The sequence spans 185 residues: Ribosome-recycling factor (185 aa).

It belongs to the RRF family.

The protein resides in the cytoplasm. Its function is as follows. Responsible for the release of ribosomes from messenger RNA at the termination of protein biosynthesis. May increase the efficiency of translation by recycling ribosomes from one round of translation to another. This Desulforapulum autotrophicum (strain ATCC 43914 / DSM 3382 / VKM B-1955 / HRM2) (Desulfobacterium autotrophicum) protein is Ribosome-recycling factor.